Consider the following 158-residue polypeptide: Low molecular weight phosphotyrosine protein phosphatase (158 aa).

The residue at position 2 (Ala-2) is an N-acetylalanine. The Nucleophile role is filled by Cys-13. Arg-19 is an active-site residue. The active-site Proton donor is Asp-130. Residues Tyr-132 and Tyr-133 each carry the phosphotyrosine modification.

It belongs to the low molecular weight phosphotyrosine protein phosphatase family. Interacts with EPHA2; dephosphorylates EPHA2. Interacts with EPHB1. As to quaternary structure, interacts with the SH3 domain of SPTAN1. There is no interaction observed for isoform 2. Phosphorylated by LCK. Phosphorylation at Tyr-132 increases its phosphatase activity. In terms of tissue distribution, widely expressed with highest levels in brain and liver and lowest levels in muscle.

Its subcellular location is the cytoplasm. It catalyses the reaction O-phospho-L-tyrosyl-[protein] + H2O = L-tyrosyl-[protein] + phosphate. It carries out the reaction a phosphate monoester + H2O = an alcohol + phosphate. Its activity is regulated as follows. Inhibited by sulfhydryl reagents. In terms of biological role, acts on tyrosine phosphorylated proteins, low-MW aryl phosphates and natural and synthetic acyl phosphates with differences in substrate specificity between isoform 1 and isoform 2. The sequence is that of Low molecular weight phosphotyrosine protein phosphatase from Mus musculus (Mouse).